We begin with the raw amino-acid sequence, 178 residues long: Ribosome maturation factor RimM (178 aa).

Residues 101 to 178 form the PRC barrel domain; the sequence is ADEYYWYQLV…VMRVEWDADF (78 aa).

The protein belongs to the RimM family. Binds ribosomal protein uS19.

The protein resides in the cytoplasm. An accessory protein needed during the final step in the assembly of 30S ribosomal subunit, possibly for assembly of the head region. Essential for efficient processing of 16S rRNA. May be needed both before and after RbfA during the maturation of 16S rRNA. It has affinity for free ribosomal 30S subunits but not for 70S ribosomes. This Pseudomonas putida (strain GB-1) protein is Ribosome maturation factor RimM.